The sequence spans 211 residues: Eukaryotic translation initiation factor 4E (211 aa).

It belongs to the eukaryotic initiation factor 4E family. EIF4F is a multi-subunit complex, the composition of which varies with external and internal environmental conditions. It is composed of at least eIF4A, eIF4E and eIF4G. eIF4E is also known to interact with other partners.

Recognizes and binds the 7-methylguanosine-containing mRNA cap during an early step in the initiation of protein synthesis and facilitates ribosome binding by inducing the unwinding of the mRNAs secondary structures. This chain is Eukaryotic translation initiation factor 4E (TIF45), found in Eremothecium gossypii (strain ATCC 10895 / CBS 109.51 / FGSC 9923 / NRRL Y-1056) (Yeast).